Reading from the N-terminus, the 270-residue chain is Cell division protein DivIB (270 aa).

Residues 1 to 28 (MAENKRVISIENRIPELKKYRKKKLVRH) are Cytoplasmic-facing. A helical membrane pass occupies residues 29-49 (LAILIGIFVILIAITLYFLSP). Residues 50 to 270 (LSKLDKIAVS…AAKEKKETNE (221 aa)) lie on the Extracellular side of the membrane. Positions 51-119 (SKLDKIAVSG…NDVQINITEF (69 aa)) constitute a POTRA domain.

It belongs to the FtsQ/DivIB family. DivIB subfamily.

It is found in the cell membrane. Functionally, cell division protein that may be involved in stabilizing or promoting the assembly of the division complex. The polypeptide is Cell division protein DivIB (Listeria monocytogenes serovar 1/2a (strain ATCC BAA-679 / EGD-e)).